A 313-amino-acid polypeptide reads, in one-letter code: Ribosomal RNA small subunit methyltransferase H (313 aa).

Residues 35-37, D55, F81, D103, and Q110 contribute to the S-adenosyl-L-methionine site; that span reads GGH.

The protein belongs to the methyltransferase superfamily. RsmH family.

The protein resides in the cytoplasm. It catalyses the reaction cytidine(1402) in 16S rRNA + S-adenosyl-L-methionine = N(4)-methylcytidine(1402) in 16S rRNA + S-adenosyl-L-homocysteine + H(+). In terms of biological role, specifically methylates the N4 position of cytidine in position 1402 (C1402) of 16S rRNA. The polypeptide is Ribosomal RNA small subunit methyltransferase H (Azotobacter vinelandii (strain DJ / ATCC BAA-1303)).